Reading from the N-terminus, the 144-residue chain is Maximins 9/H3 (144 aa).

Residues 1–18 (MNFKYIVAVSFLIASAYA) form the signal peptide. The propeptide occupies 19–43 (RSVKNDEQSLSQRDVLEEESLREIR). Position 70 is a tyrosine amide (tyrosine 70). The propeptide occupies 74 to 123 (TAEEHEVMKRLEAIMRDLDSLDHPEEASERETRGFNQDEIANLFTKKEKR). Isoleucine amide is present on isoleucine 143.

Belongs to the bombinin family. In terms of tissue distribution, expressed by the skin glands.

The protein localises to the secreted. In terms of biological role, maximin-9 shows antimicrobial activity against bacteria and against the fungus C.albicans. It has little hemolytic activity. Maximin-H3 shows antibacterial activity against both Gram-positive and Gram-negative bacteria. It also shows antimicrobial activity against the fungus C.albicans. Shows strong hemolytic activity. The protein is Maximins 9/H3 of Bombina maxima (Giant fire-bellied toad).